The chain runs to 370 residues: Queuine tRNA-ribosyltransferase (370 aa).

The active-site Proton acceptor is the Asp-89. Residues 89 to 93, Asp-143, Gln-185, and Gly-212 each bind substrate; that span reads DSGGF. The segment at 243 to 249 is RNA binding; sequence GVGKPED. Asp-262 acts as the Nucleophile in catalysis. Residues 267 to 271 are RNA binding; important for wobble base 34 recognition; the sequence is TRNAR. Residues Cys-300, Cys-302, Cys-305, and His-331 each contribute to the Zn(2+) site.

This sequence belongs to the queuine tRNA-ribosyltransferase family. Homodimer. Within each dimer, one monomer is responsible for RNA recognition and catalysis, while the other monomer binds to the replacement base PreQ1. It depends on Zn(2+) as a cofactor.

It carries out the reaction 7-aminomethyl-7-carbaguanine + guanosine(34) in tRNA = 7-aminomethyl-7-carbaguanosine(34) in tRNA + guanine. It functions in the pathway tRNA modification; tRNA-queuosine biosynthesis. Catalyzes the base-exchange of a guanine (G) residue with the queuine precursor 7-aminomethyl-7-deazaguanine (PreQ1) at position 34 (anticodon wobble position) in tRNAs with GU(N) anticodons (tRNA-Asp, -Asn, -His and -Tyr). Catalysis occurs through a double-displacement mechanism. The nucleophile active site attacks the C1' of nucleotide 34 to detach the guanine base from the RNA, forming a covalent enzyme-RNA intermediate. The proton acceptor active site deprotonates the incoming PreQ1, allowing a nucleophilic attack on the C1' of the ribose to form the product. After dissociation, two additional enzymatic reactions on the tRNA convert PreQ1 to queuine (Q), resulting in the hypermodified nucleoside queuosine (7-(((4,5-cis-dihydroxy-2-cyclopenten-1-yl)amino)methyl)-7-deazaguanosine). The chain is Queuine tRNA-ribosyltransferase from Pseudoalteromonas atlantica (strain T6c / ATCC BAA-1087).